A 631-amino-acid polypeptide reads, in one-letter code: Phosphomethylpyrimidine synthase (631 aa).

Substrate contacts are provided by residues asparagine 239, methionine 268, tyrosine 297, histidine 333, 353–355 (SRG), 394–397 (DGLR), and glutamate 433. Histidine 437 is a binding site for Zn(2+). Tyrosine 460 is a substrate binding site. Residue histidine 501 coordinates Zn(2+). Positions 581, 584, and 589 each coordinate [4Fe-4S] cluster.

The protein belongs to the ThiC family. As to quaternary structure, homodimer. Requires [4Fe-4S] cluster as cofactor.

It carries out the reaction 5-amino-1-(5-phospho-beta-D-ribosyl)imidazole + S-adenosyl-L-methionine = 4-amino-2-methyl-5-(phosphooxymethyl)pyrimidine + CO + 5'-deoxyadenosine + formate + L-methionine + 3 H(+). The protein operates within cofactor biosynthesis; thiamine diphosphate biosynthesis. Catalyzes the synthesis of the hydroxymethylpyrimidine phosphate (HMP-P) moiety of thiamine from aminoimidazole ribotide (AIR) in a radical S-adenosyl-L-methionine (SAM)-dependent reaction. The protein is Phosphomethylpyrimidine synthase of Escherichia coli O8 (strain IAI1).